Reading from the N-terminus, the 342-residue chain is MKYLVLALCTYLCSQTGADENAAQGIPLEAQRLTGEPLVAYLRRSQNLFEVNSAPTPNFEQKIMDIKYKHQKLNLMVKEDPDPEVDIPPSYDPRDVWKNCTTFYIRDQANCGSCWAVSTAAAISDRICIASKAEKQVNISATDIMTCCRPQCGDGCEGGWPIEAWKYFIYDGVVSGGEYLTKDVCRPYPIHPCGHHGNDTYYGECRGTAPTPPCKRKCRPGVRKMYRIDKRYGKDAYIVKQSVKAIQSEILRNGPVVASFAVYEDFRHYKSGIYKHTAGELRGYHAVKMIGWGNENNTDFWLIANSWHNDWGEKGYFRIIRGTNDCGIEGTIAAGIVDTESL.

Residues 1 to 18 (MKYLVLALCTYLCSQTGA) form the signal peptide. Residues 19–86 (DENAAQGIPL…VKEDPDPEVD (68 aa)) constitute a propeptide, activation peptide. Residue asparagine 99 is glycosylated (N-linked (GlcNAc...) asparagine). Cystine bridges form between cysteine 100–cysteine 128, cysteine 111–cysteine 156, cysteine 147–cysteine 214, cysteine 148–cysteine 152, cysteine 185–cysteine 218, and cysteine 193–cysteine 205. The active site involves cysteine 114. Asparagine 138 is a glycosylation site (N-linked (GlcNAc...) asparagine). N-linked (GlcNAc...) asparagine glycosylation occurs at asparagine 198. Residue histidine 285 is part of the active site. The N-linked (GlcNAc...) asparagine glycan is linked to asparagine 296. Residue asparagine 305 is part of the active site.

It belongs to the peptidase C1 family.

Functionally, expression of the protease correlates with blood-feeding and suggests a role for the protease in blood digestion. In Haemonchus contortus (Barber pole worm), this protein is Cathepsin B-like cysteine proteinase 1 (AC-1).